A 156-amino-acid polypeptide reads, in one-letter code: Small ribosomal subunit protein uS7 (156 aa).

This sequence belongs to the universal ribosomal protein uS7 family. In terms of assembly, part of the 30S ribosomal subunit. Contacts proteins S9 and S11.

One of the primary rRNA binding proteins, it binds directly to 16S rRNA where it nucleates assembly of the head domain of the 30S subunit. Is located at the subunit interface close to the decoding center, probably blocks exit of the E-site tRNA. This Mycobacterium ulcerans (strain Agy99) protein is Small ribosomal subunit protein uS7.